Reading from the N-terminus, the 229-residue chain is Small ribosomal subunit protein uS5 (229 aa).

Residues 61–124 (LEEQVLDVKL…AHAKLSLIKV (64 aa)) form the S5 DRBM domain.

Belongs to the universal ribosomal protein uS5 family. As to quaternary structure, part of the 30S ribosomal subunit. Contacts protein S4.

Functionally, with S4 and S12 plays an important role in translational accuracy. This Methanococcus maripaludis (strain C7 / ATCC BAA-1331) protein is Small ribosomal subunit protein uS5.